The sequence spans 79 residues: D-alanyl carrier protein (79 aa).

The region spanning 1-76 (MKEQIFDIIE…KIAARVQEKT (76 aa)) is the Carrier domain. S34 is subject to O-(pantetheine 4'-phosphoryl)serine.

Belongs to the DltC family. In terms of processing, 4'-phosphopantetheine is transferred from CoA to a specific serine of apo-DCP.

It localises to the cytoplasm. Its pathway is cell wall biogenesis; lipoteichoic acid biosynthesis. Its function is as follows. Carrier protein involved in the D-alanylation of lipoteichoic acid (LTA). The loading of thioester-linked D-alanine onto DltC is catalyzed by D-alanine--D-alanyl carrier protein ligase DltA. The DltC-carried D-alanyl group is further transferred to cell membrane phosphatidylglycerol (PG) by forming an ester bond, probably catalyzed by DltD. D-alanylation of LTA plays an important role in modulating the properties of the cell wall in Gram-positive bacteria, influencing the net charge of the cell wall. The protein is D-alanyl carrier protein of Lactococcus lactis subsp. cremoris (strain SK11).